We begin with the raw amino-acid sequence, 37 residues long: Large ribosomal subunit protein bL36c (37 aa).

It belongs to the bacterial ribosomal protein bL36 family.

The protein resides in the plastid. It is found in the chloroplast. The sequence is that of Large ribosomal subunit protein bL36c (rpl36) from Anthoceros angustus (Hornwort).